The chain runs to 294 residues: Lycopene elongase/hydratase (294 aa).

8 helical membrane passes run 31 to 51, 53 to 73, 115 to 135, 160 to 180, 182 to 202, 222 to 242, 243 to 263, and 274 to 294; these read FWLYLGGPVIVGVSYAADGPG, LFSPLAIALFLYFTIPGNVFL, LALLFALVLPTLGIVALLAWM, GLYILPGVIGYAAIEGVAPPA, AVVGAWLWAMGMHTFSAIPDI, TYYYCVMCWLMAAFVFNFTHW, VFGVLLLVYPGLVFGILGVGV, and AINTVVGMVFTLIALWVMLYG.

This sequence belongs to the UbiA prenyltransferase family.

It localises to the cell membrane. The catalysed reaction is all-trans-lycopene + dimethylallyl diphosphate + H2O = dihydroisopentenyldehydrorhodopin + diphosphate. It catalyses the reaction isopentenyldehydrorhodopin + dimethylallyl diphosphate + H2O = dihydrobisanhydrobacterioruberin + diphosphate. It functions in the pathway carotenoid biosynthesis. Functionally, involved in the biosynthesis of the acyclic C50 carotenoid bacterioruberin (BR). Acts as a bifunctional elongase/hydratase that catalyzes the elongation of lycopene by attaching a C(5) isoprene unit at C-2, as well as the hydroxylation of the previous end of the molecule. The enzyme acts at both ends of the substrate, and catalyzes the conversion of lycopene to the C(45) intermediate dihydroisopentenyldehydrorhodopin (DH-IDR) and the conversion of isopentenyldehydrorhodopin (IDR) to the C(50) carotenoid dihydrobisanhydrobacterioruberin (DH-BABR). Can also catalyze the conversion of lycopene to tetrahydrobisanhydrobacterioruberin (TH-BABR). This is Lycopene elongase/hydratase from Haloarcula japonica (strain ATCC 49778 / DSM 6131 / JCM 7785 / NBRC 101032 / NCIMB 13157 / TR-1).